Here is a 385-residue protein sequence, read N- to C-terminus: Glucans biosynthesis protein C (385 aa).

Helical transmembrane passes span 17–37, 60–80, 91–111, 137–157, 173–193, 212–232, 239–259, 274–294, 311–331, and 338–358; these read AWLM…SHTW, MQVF…RYPL, VGIP…IMLQ, ISHL…VWIF, KFSM…YAVI, FIVM…LAFI, LFTT…VAYL, TESV…FSFG, ASLF…AYIT, and WLGF…LYEI.

Belongs to the acyltransferase 3 family. OpgC subfamily.

The protein resides in the cell membrane. The protein operates within glycan metabolism; osmoregulated periplasmic glucan (OPG) biosynthesis. Functionally, necessary for the succinyl substitution of periplasmic glucans. Could catalyze the transfer of succinyl residues from the cytoplasmic side of the membrane to the nascent glucan backbones on the periplasmic side of the membrane. The protein is Glucans biosynthesis protein C of Escherichia coli O17:K52:H18 (strain UMN026 / ExPEC).